The chain runs to 410 residues: Translation initiation factor 2 subunit gamma (410 aa).

Residues 6–203 (QSEVNIGMVG…AIQEFIPTPE (198 aa)) form the tr-type G domain. Positions 15–22 (GHVDHGKT) are G1. Mg(2+) is bound by residues aspartate 18, threonine 22, glycine 43, and serine 45. Residue 18 to 23 (DHGKTS) coordinates GTP. Residues 43–47 (GISIR) form a G2 region. The Zn(2+) site is built by cysteine 58, cysteine 61, cysteine 73, and cysteine 76. Residues 90-93 (DAPG) are G3. GTP contacts are provided by residues 146–149 (NKID) and 181–183 (SAH). Residues 146 to 149 (NKID) are G4. Residues 181-183 (SAH) are G5.

Belongs to the TRAFAC class translation factor GTPase superfamily. Classic translation factor GTPase family. EIF2G subfamily. In terms of assembly, heterotrimer composed of an alpha, a beta and a gamma chain. It depends on Mg(2+) as a cofactor.

It catalyses the reaction GTP + H2O = GDP + phosphate + H(+). EIF-2 functions in the early steps of protein synthesis by forming a ternary complex with GTP and initiator tRNA. This Methanococcus maripaludis (strain C7 / ATCC BAA-1331) protein is Translation initiation factor 2 subunit gamma.